The chain runs to 466 residues: Uronate isomerase (466 aa).

It belongs to the metallo-dependent hydrolases superfamily. Uronate isomerase family.

The enzyme catalyses D-glucuronate = D-fructuronate. It catalyses the reaction aldehydo-D-galacturonate = keto-D-tagaturonate. The protein operates within carbohydrate metabolism; pentose and glucuronate interconversion. The protein is Uronate isomerase (uxaC) of Brucella melitensis biotype 1 (strain ATCC 23456 / CCUG 17765 / NCTC 10094 / 16M).